The sequence spans 189 residues: Probable nicotinate-nucleotide adenylyltransferase (189 aa).

The protein belongs to the NadD family.

It carries out the reaction nicotinate beta-D-ribonucleotide + ATP + H(+) = deamido-NAD(+) + diphosphate. It functions in the pathway cofactor biosynthesis; NAD(+) biosynthesis; deamido-NAD(+) from nicotinate D-ribonucleotide: step 1/1. In terms of biological role, catalyzes the reversible adenylation of nicotinate mononucleotide (NaMN) to nicotinic acid adenine dinucleotide (NaAD). The sequence is that of Probable nicotinate-nucleotide adenylyltransferase from Bacillus cereus (strain G9842).